The chain runs to 260 residues: Thiazole synthase (260 aa).

Lys-96 (schiff-base intermediate with DXP) is an active-site residue. 1-deoxy-D-xylulose 5-phosphate is bound by residues Gly-157, Ala-184–Gly-185, and Asn-206–Thr-207.

It belongs to the ThiG family. In terms of assembly, homotetramer. Forms heterodimers with either ThiH or ThiS.

The protein resides in the cytoplasm. It carries out the reaction [ThiS sulfur-carrier protein]-C-terminal-Gly-aminoethanethioate + 2-iminoacetate + 1-deoxy-D-xylulose 5-phosphate = [ThiS sulfur-carrier protein]-C-terminal Gly-Gly + 2-[(2R,5Z)-2-carboxy-4-methylthiazol-5(2H)-ylidene]ethyl phosphate + 2 H2O + H(+). It participates in cofactor biosynthesis; thiamine diphosphate biosynthesis. Functionally, catalyzes the rearrangement of 1-deoxy-D-xylulose 5-phosphate (DXP) to produce the thiazole phosphate moiety of thiamine. Sulfur is provided by the thiocarboxylate moiety of the carrier protein ThiS. In vitro, sulfur can be provided by H(2)S. The sequence is that of Thiazole synthase from Rhodopseudomonas palustris (strain BisB5).